The chain runs to 185 residues: Peptidyl-tRNA hydrolase (185 aa).

Tyrosine 14 is a tRNA binding site. Residue histidine 19 is the Proton acceptor of the active site. Positions 64, 66, and 112 each coordinate tRNA.

Belongs to the PTH family. As to quaternary structure, monomer.

The protein resides in the cytoplasm. It carries out the reaction an N-acyl-L-alpha-aminoacyl-tRNA + H2O = an N-acyl-L-amino acid + a tRNA + H(+). In terms of biological role, hydrolyzes ribosome-free peptidyl-tRNAs (with 1 or more amino acids incorporated), which drop off the ribosome during protein synthesis, or as a result of ribosome stalling. Its function is as follows. Catalyzes the release of premature peptidyl moieties from peptidyl-tRNA molecules trapped in stalled 50S ribosomal subunits, and thus maintains levels of free tRNAs and 50S ribosomes. The protein is Peptidyl-tRNA hydrolase of Alkaliphilus metalliredigens (strain QYMF).